The chain runs to 302 residues: tRNA pseudouridine synthase B (302 aa).

D48 (nucleophile) is an active-site residue.

This sequence belongs to the pseudouridine synthase TruB family. Type 1 subfamily.

The catalysed reaction is uridine(55) in tRNA = pseudouridine(55) in tRNA. Responsible for synthesis of pseudouridine from uracil-55 in the psi GC loop of transfer RNAs. The sequence is that of tRNA pseudouridine synthase B from Xylella fastidiosa (strain Temecula1 / ATCC 700964).